A 537-amino-acid polypeptide reads, in one-letter code: Cytochrome P450 734A5 (537 aa).

Residues 13–33 (GAAAVAVAAAAAWVAVYAAAA) traverse the membrane as a helical segment. Residue Cys-480 participates in heme binding.

It belongs to the cytochrome P450 family. The cofactor is heme. As to expression, exclusively expressed in roots.

It localises to the membrane. Cytochrome P450 probably involved in brassinosteroids (BRs) inactivation and regulation of BRs homeostasis. The chain is Cytochrome P450 734A5 (CYP734A5) from Oryza sativa subsp. japonica (Rice).